Here is a 437-residue protein sequence, read N- to C-terminus: Argininosuccinate lyase (437 aa).

The protein belongs to the lyase 1 family. Argininosuccinate lyase subfamily.

Its subcellular location is the cytoplasm. The catalysed reaction is 2-(N(omega)-L-arginino)succinate = fumarate + L-arginine. It participates in amino-acid biosynthesis; L-arginine biosynthesis; L-arginine from L-ornithine and carbamoyl phosphate: step 3/3. The protein is Argininosuccinate lyase of Clostridium novyi (strain NT).